The chain runs to 360 residues: Endolytic murein transglycosylase (360 aa).

The helical transmembrane segment at 16-36 (IILSSIVVLFLIIGGAFLYGK) threads the bilayer.

This sequence belongs to the transglycosylase MltG family.

The protein resides in the cell membrane. It carries out the reaction a peptidoglycan chain = a peptidoglycan chain with N-acetyl-1,6-anhydromuramyl-[peptide] at the reducing end + a peptidoglycan chain with N-acetylglucosamine at the non-reducing end.. Its function is as follows. Functions as a peptidoglycan terminase that cleaves nascent peptidoglycan strands endolytically to terminate their elongation. This chain is Endolytic murein transglycosylase, found in Bacillus subtilis (strain 168).